Reading from the N-terminus, the 219-residue chain is Ropporin-1-like protein (219 aa).

The RIIa domain maps to 17-54 (PELPDILKQFTKAAIRTQPHDLLQWSAAYFDSLSKGEP).

It belongs to the ropporin family. Component of axonemal radial spoke complexes.

It localises to the cell projection. Its subcellular location is the cilium. The protein localises to the flagellum. Functions as part of axonemal radial spoke complexes that play an important part in the motility of sperm and cilia. Important for male fertility. Involved in fibrous sheath integrity and sperm motility, plays a role in PKA-dependent signaling processes required for spermatozoa capacitation. The polypeptide is Ropporin-1-like protein (ropn1l) (Xenopus laevis (African clawed frog)).